The chain runs to 302 residues: UPF0761 membrane protein Tola_0461 (302 aa).

The next 6 helical transmembrane spans lie at 51-71 (YVSL…LSWL), 111-131 (TTSI…AAID), 150-170 (ITMY…SLLL), 188-208 (LGGG…ILLL), 222-242 (ALLG…GFGY), and 256-276 (ALAG…VVLL).

Belongs to the UPF0761 family.

Its subcellular location is the cell inner membrane. This Tolumonas auensis (strain DSM 9187 / NBRC 110442 / TA 4) protein is UPF0761 membrane protein Tola_0461.